A 255-amino-acid polypeptide reads, in one-letter code: Imidazole glycerol phosphate synthase subunit HisF (255 aa).

Active-site residues include Asp11 and Asp130.

This sequence belongs to the HisA/HisF family. Heterodimer of HisH and HisF.

It is found in the cytoplasm. It catalyses the reaction 5-[(5-phospho-1-deoxy-D-ribulos-1-ylimino)methylamino]-1-(5-phospho-beta-D-ribosyl)imidazole-4-carboxamide + L-glutamine = D-erythro-1-(imidazol-4-yl)glycerol 3-phosphate + 5-amino-1-(5-phospho-beta-D-ribosyl)imidazole-4-carboxamide + L-glutamate + H(+). It functions in the pathway amino-acid biosynthesis; L-histidine biosynthesis; L-histidine from 5-phospho-alpha-D-ribose 1-diphosphate: step 5/9. Its function is as follows. IGPS catalyzes the conversion of PRFAR and glutamine to IGP, AICAR and glutamate. The HisF subunit catalyzes the cyclization activity that produces IGP and AICAR from PRFAR using the ammonia provided by the HisH subunit. This is Imidazole glycerol phosphate synthase subunit HisF from Syntrophotalea carbinolica (strain DSM 2380 / NBRC 103641 / GraBd1) (Pelobacter carbinolicus).